The sequence spans 406 residues: Suppressor protein SRP40 (406 aa).

Basic and acidic residues predominate over residues 1–25 (MASKKIKVDEVPKLSVKEKEIEEKS). Residues 1–335 (MASKKIKVDE…EIKEGQRKHF (335 aa)) are disordered. Over residues 26–115 (SSSSSSSSSS…SSSSSSSSDE (90 aa)) the composition is skewed to low complexity. The span at 125 to 148 (ETKKRARESDNEDAKETKKAKTEP) shows a compositional bias: basic and acidic residues. S133 carries the phosphoserine modification. Composition is skewed to low complexity over residues 149–168 (ESSS…SESE), 176–186 (DSSSSSSSSSD), 194–233 (DSQS…SSSD), and 243–268 (DSDS…SSDS). Basic and acidic residues predominate over residues 283–297 (LETKEATADESKAEE). Phosphothreonine is present on T289. Residue S293 is modified to Phosphoserine. Residues 298–316 (TPASSNESTPSASSSSSAN) are compositionally biased toward low complexity. Basic and acidic residues predominate over residues 325-335 (DEIKEGQRKHF). Residue S394 is modified to Phosphoserine.

Pyrophosphorylated by 5-diphosphoinositol pentakisphosphate (5-IP7). Serine pyrophosphorylation is achieved by Mg(2+)-dependent, but enzyme independent transfer of a beta-phosphate from a inositol pyrophosphate to a pre-phosphorylated serine residue.

Functionally, not known; weak suppressor of a mutant of the subunit AC40 of DNA dependent RNA polymerase I and III. This Saccharomyces cerevisiae (strain ATCC 204508 / S288c) (Baker's yeast) protein is Suppressor protein SRP40 (SRP40).